A 164-amino-acid chain; its full sequence is UPF0304 protein Asuc_0543 (164 aa).

The protein belongs to the UPF0304 family.

This is UPF0304 protein Asuc_0543 from Actinobacillus succinogenes (strain ATCC 55618 / DSM 22257 / CCUG 43843 / 130Z).